Consider the following 630-residue polypeptide: MIYHEIYDVIVVGGGHAGTEAALAPARMGLKTLLLTHNVDTLGQMSCNPAIGGIGKGHLVKEIDAMGGLMAIAIDQAGIQFRTLNSSKGPAVRATRAQADRVLYRQAVRTALENQPNLDIFQQEVVDILVENNRAVGAVTKMGLTFKARSVVLTAGTFLAGKIHIGLDNYAGGRAGDPSATMLADRLRDLNLRVDRLKTGTPPRLDARTINFDVLAKQHGDAELPVMSFMGAVDLHPRQIPCYITHTNEQTHDLIRNSLDRSPMYTGVIEGSGPRYCPSIEDKVMRFSDRNSHQIYLEPEGLSTIEVYPNGISTSLPFDVQMGIVNSMKGLEKTRIIKPGYAIEYDYFDPRDLKPTLETKAIEGLFFAGQINGTTGYEEAAAQGLLAGINAALQVQGKEAWFPTRDLAYTGVLVDDLCTLGTKEPYRVFTSRAEYRLLLREDNADIRLTPIAHELGLIDDARWARFNQKMENIERERERLKQIWIHPQSEHLAVVNELVNSPLTREASGEDLLRRPEVTYDKLTQVAAFAPALDDKQAAEQVEISIKYQGYIEHQQNEIERHKRHENTLIPAEFDYDKVESLSNEVRAKLMQHRPVSIGQASRISGITPAAISILLVNLKKQGMLKRGEL.

Residue glycine 13–glycine 18 coordinates FAD. NAD(+) is bound at residue glycine 273–phenylalanine 287.

It belongs to the MnmG family. As to quaternary structure, homodimer. Heterotetramer of two MnmE and two MnmG subunits. It depends on FAD as a cofactor.

The protein localises to the cytoplasm. Its function is as follows. NAD-binding protein involved in the addition of a carboxymethylaminomethyl (cmnm) group at the wobble position (U34) of certain tRNAs, forming tRNA-cmnm(5)s(2)U34. This Actinobacillus pleuropneumoniae serotype 3 (strain JL03) protein is tRNA uridine 5-carboxymethylaminomethyl modification enzyme MnmG.